Here is a 184-residue protein sequence, read N- to C-terminus: ATP synthase subunit delta (184 aa).

Belongs to the ATPase delta chain family. As to quaternary structure, F-type ATPases have 2 components, F(1) - the catalytic core - and F(0) - the membrane proton channel. F(1) has five subunits: alpha(3), beta(3), gamma(1), delta(1), epsilon(1). F(0) has three main subunits: a(1), b(2) and c(10-14). The alpha and beta chains form an alternating ring which encloses part of the gamma chain. F(1) is attached to F(0) by a central stalk formed by the gamma and epsilon chains, while a peripheral stalk is formed by the delta and b chains.

It localises to the cell inner membrane. In terms of biological role, f(1)F(0) ATP synthase produces ATP from ADP in the presence of a proton or sodium gradient. F-type ATPases consist of two structural domains, F(1) containing the extramembraneous catalytic core and F(0) containing the membrane proton channel, linked together by a central stalk and a peripheral stalk. During catalysis, ATP synthesis in the catalytic domain of F(1) is coupled via a rotary mechanism of the central stalk subunits to proton translocation. This protein is part of the stalk that links CF(0) to CF(1). It either transmits conformational changes from CF(0) to CF(1) or is implicated in proton conduction. This Rickettsia massiliae (strain Mtu5) protein is ATP synthase subunit delta.